Consider the following 324-residue polypeptide: Alkanal monooxygenase beta chain (324 aa).

It belongs to the bacterial luciferase oxidoreductase family. Heterodimer of an alpha and a beta chain.

It carries out the reaction a long-chain fatty aldehyde + FMNH2 + O2 = a long-chain fatty acid + hnu + FMN + H2O + 2 H(+). Its function is as follows. Light-emitting reaction in luminous bacteria. The specific role of the beta subunit is unknown, but it is absolutely required for bioluminescence activity. This Photorhabdus laumondii subsp. laumondii (strain DSM 15139 / CIP 105565 / TT01) (Photorhabdus luminescens subsp. laumondii) protein is Alkanal monooxygenase beta chain (luxB).